We begin with the raw amino-acid sequence, 217 residues long: Large ribosomal subunit protein uL3 (217 aa).

Residues 134 to 146 (GRATHGNSRSHNV) are compositionally biased toward polar residues. The disordered stretch occupies residues 134-154 (GRATHGNSRSHNVPGSIGMAQ). Gln-154 carries the N5-methylglutamine modification.

Belongs to the universal ribosomal protein uL3 family. Part of the 50S ribosomal subunit. Forms a cluster with proteins L14 and L19. Methylated by PrmB.

In terms of biological role, one of the primary rRNA binding proteins, it binds directly near the 3'-end of the 23S rRNA, where it nucleates assembly of the 50S subunit. This chain is Large ribosomal subunit protein uL3, found in Burkholderia cenocepacia (strain HI2424).